We begin with the raw amino-acid sequence, 137 residues long: Venom allergen 4 (137 aa).

The signal sequence occupies residues 1-19 (MKTFVLVSCLLVFTQIIYA).

It belongs to the ant venom allergen 2/4 family. Monomer. As to expression, expressed by the venom gland.

Its subcellular location is the secreted. This Solenopsis invicta (Red imported fire ant) protein is Venom allergen 4.